The sequence spans 912 residues: Effector protein hopAE1 (912 aa).

Over residues 1–13 (MMPSQITRSSHSS) the composition is skewed to polar residues. Residues 1 to 32 (MMPSQITRSSHSSLPEVAPASGDATGVSEQTP) form a disordered region.

This sequence belongs to the HopW family.

The protein resides in the secreted. This chain is Effector protein hopAE1 (hopAE1), found in Pseudomonas savastanoi pv. phaseolicola (strain 1448A / Race 6) (Pseudomonas syringae pv. phaseolicola (strain 1448A / Race 6)).